The following is a 304-amino-acid chain: Acetyl-coenzyme A carboxylase carboxyl transferase subunit beta (304 aa).

Residues 23–292 (VWTKCDSCGQ…PNPDAPREGV (270 aa)) enclose the CoA carboxyltransferase N-terminal domain. Residues cysteine 27, cysteine 30, cysteine 46, and cysteine 49 each contribute to the Zn(2+) site. Residues 27-49 (CDSCGQVLYRAELERNLEVCPKC) form a C4-type zinc finger. Positions 284 to 304 (NPDAPREGVVVPPAPDQESEV) are disordered.

The protein belongs to the AccD/PCCB family. In terms of assembly, acetyl-CoA carboxylase is a heterohexamer composed of biotin carboxyl carrier protein (AccB), biotin carboxylase (AccC) and two subunits each of ACCase subunit alpha (AccA) and ACCase subunit beta (AccD). Requires Zn(2+) as cofactor.

Its subcellular location is the cytoplasm. It carries out the reaction N(6)-carboxybiotinyl-L-lysyl-[protein] + acetyl-CoA = N(6)-biotinyl-L-lysyl-[protein] + malonyl-CoA. Its pathway is lipid metabolism; malonyl-CoA biosynthesis; malonyl-CoA from acetyl-CoA: step 1/1. Functionally, component of the acetyl coenzyme A carboxylase (ACC) complex. Biotin carboxylase (BC) catalyzes the carboxylation of biotin on its carrier protein (BCCP) and then the CO(2) group is transferred by the transcarboxylase to acetyl-CoA to form malonyl-CoA. This is Acetyl-coenzyme A carboxylase carboxyl transferase subunit beta from Salmonella paratyphi A (strain ATCC 9150 / SARB42).